A 420-amino-acid polypeptide reads, in one-letter code: Bicoumarin synthase ktnC (420 aa).

Position 362 (Cys362) interacts with heme.

This sequence belongs to the cytochrome P450 family. Requires heme as cofactor.

It catalyses the reaction 2 7-demethylsiderin + NADPH + O2 = orlandin + NADP(+) + 2 H2O. Its pathway is secondary metabolite biosynthesis. In terms of biological role, non-reducing polyketide synthase; part of the gene cluster that mediates the biosynthesis of the bicoumarin kotanin. The non-reducing polyketide synthase ktnS first catalyzes the formation of the pentaketidic 4,7-dihydroxy-5-methylcoumarin from acetyl coenzyme A and 4 malonyl coenzyme A molecules. Further O-methylation by ktnB leads to the formation of 7-demethylsiderin. Then, an oxidative phenol coupling catalyzed by the cytochrome P450 monooxygenase ktnC forms the 8,8'-dimer P-orlandin via dimerization the monomeric precursor, 7-demethylsiderin. P-orlandin is subsequently O-methylated in a stepwise fashion to demethylkotanin and kotanin. The polypeptide is Bicoumarin synthase ktnC (Aspergillus niger (strain ATCC MYA-4892 / CBS 513.88 / FGSC A1513)).